The following is a 344-amino-acid chain: Alkyl hydroperoxide reductase Rv2159c (344 aa).

Residues 49–50 (AG) form an important for interaction with PknI region. C84 (cysteine sulfenic acid (-SOH) intermediate) is an active-site residue.

This sequence belongs to the AhpD family. Interacts with the serine/threonine-protein kinase PknI. The PknI-Rv2159c interaction is mediated through phosphorylation independent physical interaction.

With respect to regulation, interaction with PknI increases the peroxidase activity by several folds. Functionally, involved in protection against oxidative stresses. May play a significant role in maintaining the cellular homeostasis during stress and virulence of M.tuberculosis. In vitro, catalyzes the decomposition of cumene hydroperoxide (CHP) to acetophenone. This Mycobacterium tuberculosis (strain ATCC 25618 / H37Rv) protein is Alkyl hydroperoxide reductase Rv2159c.